A 122-amino-acid polypeptide reads, in one-letter code: Small ribosomal subunit protein uS13 (122 aa).

A disordered region spans residues 93 to 122 (RRGLPVRGQKTKTNARTRKGPKKTMANKKK).

Belongs to the universal ribosomal protein uS13 family. Part of the 30S ribosomal subunit. Forms a loose heterodimer with protein S19. Forms two bridges to the 50S subunit in the 70S ribosome.

In terms of biological role, located at the top of the head of the 30S subunit, it contacts several helices of the 16S rRNA. In the 70S ribosome it contacts the 23S rRNA (bridge B1a) and protein L5 of the 50S subunit (bridge B1b), connecting the 2 subunits; these bridges are implicated in subunit movement. Contacts the tRNAs in the A and P-sites. This Clostridium botulinum (strain Alaska E43 / Type E3) protein is Small ribosomal subunit protein uS13.